Consider the following 299-residue polypeptide: NAD kinase (299 aa).

The Proton acceptor role is filled by D71. NAD(+) contacts are provided by residues 71 to 72 (DG), 145 to 146 (ND), R173, D175, 186 to 191 (TAYSLS), A210, and Q248.

The protein belongs to the NAD kinase family. It depends on a divalent metal cation as a cofactor.

It is found in the cytoplasm. The enzyme catalyses NAD(+) + ATP = ADP + NADP(+) + H(+). Functionally, involved in the regulation of the intracellular balance of NAD and NADP, and is a key enzyme in the biosynthesis of NADP. Catalyzes specifically the phosphorylation on 2'-hydroxyl of the adenosine moiety of NAD to yield NADP. This Bordetella pertussis (strain Tohama I / ATCC BAA-589 / NCTC 13251) protein is NAD kinase.